The chain runs to 331 residues: Beta-hexosaminidase (331 aa).

Substrate is bound by residues Asp-60, Arg-68, Arg-133, and 163-164; that span reads KH. His-176 serves as the catalytic Proton donor/acceptor. Asp-247 functions as the Nucleophile in the catalytic mechanism.

Belongs to the glycosyl hydrolase 3 family. NagZ subfamily.

It localises to the cytoplasm. The enzyme catalyses Hydrolysis of terminal non-reducing N-acetyl-D-hexosamine residues in N-acetyl-beta-D-hexosaminides.. The protein operates within cell wall biogenesis; peptidoglycan recycling. Functionally, plays a role in peptidoglycan recycling by cleaving the terminal beta-1,4-linked N-acetylglucosamine (GlcNAc) from peptide-linked peptidoglycan fragments, giving rise to free GlcNAc, anhydro-N-acetylmuramic acid and anhydro-N-acetylmuramic acid-linked peptides. In Xanthomonas campestris pv. campestris (strain B100), this protein is Beta-hexosaminidase.